Reading from the N-terminus, the 416-residue chain is UDP-N-acetylmuramoylalanine--D-glutamate ligase (416 aa).

104 to 110 (GSNGKST) is a binding site for ATP.

It belongs to the MurCDEF family.

The protein localises to the cytoplasm. It carries out the reaction UDP-N-acetyl-alpha-D-muramoyl-L-alanine + D-glutamate + ATP = UDP-N-acetyl-alpha-D-muramoyl-L-alanyl-D-glutamate + ADP + phosphate + H(+). The protein operates within cell wall biogenesis; peptidoglycan biosynthesis. In terms of biological role, cell wall formation. Catalyzes the addition of glutamate to the nucleotide precursor UDP-N-acetylmuramoyl-L-alanine (UMA). The protein is UDP-N-acetylmuramoylalanine--D-glutamate ligase of Francisella tularensis subsp. tularensis (strain WY96-3418).